The sequence spans 1181 residues: Katanin p80 WD40 repeat-containing subunit B1 homolog KTN80.2 (1181 aa).

7 WD repeats span residues 13–53, 56–95, 98–137, 140–181, 183–221, 224–264, and 266–303; these read AHSA…SLMS, GHTS…MVRA, GHRS…CIQT, GHSR…HEFK, HEGP…LIGS, PEAT…DGVD, and GWST…IEPY. Positions 114–130 match the DWD box motif; sequence FLASGSSDANLKIWDIR. Disordered stretches follow at residues 361–383, 503–597, 702–739, 754–869, and 988–1008; these read AHKS…NKSL, KPPR…ESKS, TSMA…QTRT, KMKS…VIST, and TKTQ…ISGR. Polar residues-rich tracts occupy residues 365 to 379 and 509 to 526; these read GSLS…QAGD and RSPS…STDS. Basic and acidic residues-rich tracts occupy residues 530-553 and 569-585; these read DSKK…DDRG and RSER…ELKS. Composition is skewed to polar residues over residues 703-739, 754-791, 822-841, and 850-859; these read SMAT…QTRT, KMKS…TRTS, SATN…QAKT, and ILNQRQTTNM. The span at 998 to 1008 shows a compositional bias: basic and acidic residues; sequence TQKEEPQISGR.

This sequence belongs to the WD repeat KATNB1 family. Component of KTN80-KTN1 complexes composed of a hexamer of KTN1-KTN80 heterodimers that sense microtubule (MT) geometry to confer precise MT severing. Interacts directly with AAA1/KTN1. Interacts with subunits of the CUL4-based E3 ligase complex DDB1A and DDB1B. In terms of tissue distribution, expressed at low levels in siliques, flowers, leaves, stems and roots.

It localises to the cytoplasm. The protein resides in the cytoskeleton. Functionally, may participate in a complex which severs microtubules in an ATP-dependent manner. Microtubule severing may promote rapid reorganization of cellular microtubule arrays. Confers precision to microtubule (MT) severing by specific targeting of KTN1 to MT cleavage sites such as crossover or branching nucleation sites. Together with other KTN80s, regulates cell elongation by modulating MT organization. Negative regulator of abscisic acid (ABA) responses. May function as a substrate receptor for cullin-RING ubiquitin ligase 4 complexes (CRL4), a family of E3 ligases involved in protein degradation. The polypeptide is Katanin p80 WD40 repeat-containing subunit B1 homolog KTN80.2 (Arabidopsis thaliana (Mouse-ear cress)).